The primary structure comprises 202 residues: MLTDVEGRAAVKLARKTIESFLSEEKLPEPQELGFELSPVFGEKRGVFVTLTESGLLRGCIGHPFPDSRLEDAIMDSAISAATRDPRFPPVREDELNKIVVEVTILTQPEKINAPAEELPERIEVGKHGLIVKQGYCQGLLLPQVAPEYNMDSIEFLGHTCLKAGLLPDAWLKGAEVSCFEGQIFKEKEPCGEVLEENFSCE.

The region spanning 5-196 is the AMMECR1 domain; sequence VEGRAAVKLA…EKEPCGEVLE (192 aa).

This is Protein Mbar_A1807 from Methanosarcina barkeri (strain Fusaro / DSM 804).